Consider the following 356-residue polypeptide: UDP-N-acetylglucosamine--N-acetylmuramyl-(pentapeptide) pyrophosphoryl-undecaprenol N-acetylglucosamine transferase (356 aa).

UDP-N-acetyl-alpha-D-glucosamine is bound by residues 15 to 17 (TGG), asparagine 127, arginine 163, serine 191, isoleucine 244, 263 to 268 (ALTVSE), and glutamine 288.

It belongs to the glycosyltransferase 28 family. MurG subfamily.

The protein localises to the cell inner membrane. The catalysed reaction is di-trans,octa-cis-undecaprenyl diphospho-N-acetyl-alpha-D-muramoyl-L-alanyl-D-glutamyl-meso-2,6-diaminopimeloyl-D-alanyl-D-alanine + UDP-N-acetyl-alpha-D-glucosamine = di-trans,octa-cis-undecaprenyl diphospho-[N-acetyl-alpha-D-glucosaminyl-(1-&gt;4)]-N-acetyl-alpha-D-muramoyl-L-alanyl-D-glutamyl-meso-2,6-diaminopimeloyl-D-alanyl-D-alanine + UDP + H(+). The protein operates within cell wall biogenesis; peptidoglycan biosynthesis. Functionally, cell wall formation. Catalyzes the transfer of a GlcNAc subunit on undecaprenyl-pyrophosphoryl-MurNAc-pentapeptide (lipid intermediate I) to form undecaprenyl-pyrophosphoryl-MurNAc-(pentapeptide)GlcNAc (lipid intermediate II). The protein is UDP-N-acetylglucosamine--N-acetylmuramyl-(pentapeptide) pyrophosphoryl-undecaprenol N-acetylglucosamine transferase of Yersinia pestis bv. Antiqua (strain Antiqua).